Reading from the N-terminus, the 90-residue chain is Large ribosomal subunit protein bL27 (90 aa).

The segment at 1–20 is disordered; that stretch reads MAHKKAGGSSRNGRDSAGKR.

It belongs to the bacterial ribosomal protein bL27 family.

The sequence is that of Large ribosomal subunit protein bL27 from Rhodopseudomonas palustris (strain ATCC BAA-98 / CGA009).